The sequence spans 56 residues: Alpha-conotoxin TxIA (56 aa).

A signal peptide spans Met-1–Ser-16. The propeptide occupies Phe-17–Lys-39. 2 disulfides stabilise this stretch: Cys-41-Cys-47 and Cys-42-Cys-55. Residues Ser-43–Pro-45 are ser-Xaa-Pro motif, crucial for potent interaction with nAChR. 4-hydroxyproline; partial is present on residues Pro-45 and Pro-46. Cysteine amide is present on Cys-55.

This sequence belongs to the conotoxin A superfamily. Post-translationally, exists in 4 different forms, depending on hydroxylations. Tx1a-PP does not contain hydroxyproline, tx1a-OP has one hydroxyproline at position 45, tx1a-PO has one hydroxyproline at position 46, and tx1a-PP has two hydroxyprolines at positions 45 and 46. Expressed by the venom duct. Tx1a that containing 1 or 2 non-hydroxylated prolines are mostly present in part 5 of the venom duct (distal part near the pharynx), whereas tx1a-OO (with 2 hydroxyprolines) is mostly present in part 4 of the venom duct (follewed by part 3).

Its subcellular location is the secreted. Alpha-conotoxins act on postsynaptic membranes, they bind to the nicotinic acetylcholine receptors (nAChR) and thus inhibit them. This toxin inhibits rat alpha-3-beta-2/CHRNA3-CHRNB2 (IC(50)=3.5 nM), rat alpha-7/CHRNA7 (IC(50)=392 nM) nAChR, and the L.stagnalis soluble acetylcholine receptor (all tested without hydroxyproline). This is Alpha-conotoxin TxIA from Conus textile (Cloth-of-gold cone).